Reading from the N-terminus, the 296-residue chain is Light-independent protochlorophyllide reductase iron-sulfur ATP-binding protein (296 aa).

ATP contacts are provided by residues 39–44 and K68; that span reads GIGKST. A Mg(2+)-binding site is contributed by S43. Residues C124 and C158 each contribute to the [4Fe-4S] cluster site. 209–210 serves as a coordination point for ATP; it reads NR.

Belongs to the NifH/BchL/ChlL family. In terms of assembly, homodimer. Protochlorophyllide reductase is composed of three subunits; ChlL, ChlN and ChlB. [4Fe-4S] cluster serves as cofactor.

It carries out the reaction chlorophyllide a + oxidized 2[4Fe-4S]-[ferredoxin] + 2 ADP + 2 phosphate = protochlorophyllide a + reduced 2[4Fe-4S]-[ferredoxin] + 2 ATP + 2 H2O. It functions in the pathway porphyrin-containing compound metabolism; chlorophyll biosynthesis (light-independent). In terms of biological role, component of the dark-operative protochlorophyllide reductase (DPOR) that uses Mg-ATP and reduced ferredoxin to reduce ring D of protochlorophyllide (Pchlide) to form chlorophyllide a (Chlide). This reaction is light-independent. The L component serves as a unique electron donor to the NB-component of the complex, and binds Mg-ATP. This Prochlorococcus marinus (strain SARG / CCMP1375 / SS120) protein is Light-independent protochlorophyllide reductase iron-sulfur ATP-binding protein.